A 60-amino-acid chain; its full sequence is Large ribosomal subunit protein uL30 (60 aa).

This sequence belongs to the universal ribosomal protein uL30 family. Part of the 50S ribosomal subunit.

This chain is Large ribosomal subunit protein uL30, found in Verminephrobacter eiseniae (strain EF01-2).